Here is a 168-residue protein sequence, read N- to C-terminus: UPF0303 protein YE1367 (168 aa).

It belongs to the UPF0303 family.

The chain is UPF0303 protein YE1367 from Yersinia enterocolitica serotype O:8 / biotype 1B (strain NCTC 13174 / 8081).